The chain runs to 379 residues: Mannan endo-1,4-beta-mannosidase 7 (379 aa).

The substrate site is built by Trp64 and Asn179. The active-site Proton donor is Glu180. Residue Tyr260 participates in substrate binding. The active-site Nucleophile is the Glu300. Trp342 is a binding site for substrate.

This sequence belongs to the glycosyl hydrolase 5 (cellulase A) family. As to expression, expression not detected.

The enzyme catalyses Random hydrolysis of (1-&gt;4)-beta-D-mannosidic linkages in mannans, galactomannans and glucomannans.. The polypeptide is Mannan endo-1,4-beta-mannosidase 7 (MAN7) (Oryza sativa subsp. japonica (Rice)).